A 531-amino-acid chain; its full sequence is Fatty acid--[acyl-carrier-protein] ligase MmaC (531 aa).

Thr169 contacts Mg(2+). Residues Ile218, Val308, and Ser312 each contribute to the ATP site. Residue Glu313 coordinates Mg(2+). Asp403 provides a ligand contact to ATP.

This sequence belongs to the ATP-dependent AMP-binding enzyme family. Mg(2+) is required as a cofactor.

It catalyses the reaction a (2E)-enoyl fatty acid + holo-[ACP] + ATP = a (2E)-enoyl-[ACP] + AMP + diphosphate. The catalysed reaction is a (2E)-enoyl fatty acid + ATP + H(+) = a (2E)-2-fatty-enoyl-AMP + diphosphate. It carries out the reaction a (2E)-2-fatty-enoyl-AMP + holo-[ACP] = a (2E)-enoyl-[ACP] + AMP + H(+). The enzyme catalyses (2E)-decenoate + holo-[ACP] + ATP = (2E)-decenoyl-[ACP] + AMP + diphosphate. It catalyses the reaction a (3R)-3-isocyanyl-fatty acid + holo-[ACP] + ATP = a (3R)-3-isocyanyl-fatty acyl-[ACP] + AMP + diphosphate. The catalysed reaction is a (3R)-3-isocyanyl-fatty acid + ATP + H(+) = a (3R)-3-isocyanyl-fatty acyl-AMP + diphosphate. It carries out the reaction a (3R)-3-isocyanyl-fatty acyl-AMP + holo-[ACP] = a (3R)-3-isocyanyl-fatty acyl-[ACP] + AMP + H(+). In terms of biological role, acyl:acyl-carrier protein ligase involved in the biosynthesis of a unique class of isonitrile lipopeptides (INLPs) that seem to play a role in metal acquisition in M.marinum. Acts twice during the INLP pathway, catalyzing the activation of (2E)-2-decenoate as well as probably the corresponding (3R)-3-isocyanyl-fatty acid as acyl-adenylates (acyl-AMP), and then the acyl transfer to the dedicated acyl-carrier protein MmaB. The chain is Fatty acid--[acyl-carrier-protein] ligase MmaC from Mycobacterium marinum (strain ATCC BAA-535 / M).